The following is an 86-amino-acid chain: UPF0386 protein RC1_1783 (86 aa).

This sequence belongs to the UPF0386 family.

The polypeptide is UPF0386 protein RC1_1783 (Rhodospirillum centenum (strain ATCC 51521 / SW)).